Here is a 180-residue protein sequence, read N- to C-terminus: Shikimate kinase (180 aa).

14-19 (GAGKST) is a binding site for ATP. A Mg(2+)-binding site is contributed by serine 18. 3 residues coordinate substrate: aspartate 36, arginine 60, and glycine 82. Position 120 (arginine 120) interacts with ATP. Arginine 140 serves as a coordination point for substrate. Glutamine 157 lines the ATP pocket.

This sequence belongs to the shikimate kinase family. In terms of assembly, monomer. Requires Mg(2+) as cofactor.

It is found in the cytoplasm. It catalyses the reaction shikimate + ATP = 3-phosphoshikimate + ADP + H(+). Its pathway is metabolic intermediate biosynthesis; chorismate biosynthesis; chorismate from D-erythrose 4-phosphate and phosphoenolpyruvate: step 5/7. Functionally, catalyzes the specific phosphorylation of the 3-hydroxyl group of shikimic acid using ATP as a cosubstrate. The polypeptide is Shikimate kinase (Haemophilus influenzae (strain PittGG)).